The following is a 374-amino-acid chain: Carbamoyl phosphate synthase small chain (374 aa).

The segment at 1-183 (MVLADGQMIW…QNGYSVVDNQ (183 aa)) is CPSase. L-glutamine contacts are provided by Ser-41, Gly-235, and Gly-237. Positions 187–374 (HVVAIDYGLK…FIDLIAKERP (188 aa)) constitute a Glutamine amidotransferase type-1 domain. Cys-264 serves as the catalytic Nucleophile. L-glutamine contacts are provided by Leu-265, Gln-268, Asn-306, Gly-308, and Phe-309. Residues His-348 and Glu-350 contribute to the active site.

This sequence belongs to the CarA family. As to quaternary structure, composed of two chains; the small (or glutamine) chain promotes the hydrolysis of glutamine to ammonia, which is used by the large (or ammonia) chain to synthesize carbamoyl phosphate. Tetramer of heterodimers (alpha,beta)4.

It catalyses the reaction hydrogencarbonate + L-glutamine + 2 ATP + H2O = carbamoyl phosphate + L-glutamate + 2 ADP + phosphate + 2 H(+). The enzyme catalyses L-glutamine + H2O = L-glutamate + NH4(+). It participates in amino-acid biosynthesis; L-arginine biosynthesis; carbamoyl phosphate from bicarbonate: step 1/1. The protein operates within pyrimidine metabolism; UMP biosynthesis via de novo pathway; (S)-dihydroorotate from bicarbonate: step 1/3. Its function is as follows. Small subunit of the glutamine-dependent carbamoyl phosphate synthetase (CPSase). CPSase catalyzes the formation of carbamoyl phosphate from the ammonia moiety of glutamine, carbonate, and phosphate donated by ATP, constituting the first step of 2 biosynthetic pathways, one leading to arginine and/or urea and the other to pyrimidine nucleotides. The small subunit (glutamine amidotransferase) binds and cleaves glutamine to supply the large subunit with the substrate ammonia. The chain is Carbamoyl phosphate synthase small chain from Zymomonas mobilis subsp. mobilis (strain ATCC 31821 / ZM4 / CP4).